A 419-amino-acid polypeptide reads, in one-letter code: Isocitrate dehydrogenase [NADP] (419 aa).

T102 is an NADP(+) binding site. D-threo-isocitrate contacts are provided by S111, N113, R117, R127, and R151. D306 provides a ligand contact to Mg(2+). Residues 338–344, N351, Y390, and R394 contribute to the NADP(+) site; that span reads HGSAPKY.

The protein belongs to the isocitrate and isopropylmalate dehydrogenases family. As to quaternary structure, homodimer. The cofactor is Mg(2+). Requires Mn(2+) as cofactor.

It catalyses the reaction D-threo-isocitrate + NADP(+) = 2-oxoglutarate + CO2 + NADPH. Its function is as follows. Catalyzes the oxidative decarboxylation of isocitrate to 2-oxoglutarate and carbon dioxide with the concomitant reduction of NADP(+). The sequence is that of Isocitrate dehydrogenase [NADP] from Haloferax volcanii (strain ATCC 29605 / DSM 3757 / JCM 8879 / NBRC 14742 / NCIMB 2012 / VKM B-1768 / DS2) (Halobacterium volcanii).